The following is a 118-amino-acid chain: Large ribosomal subunit protein bL20 (118 aa).

Belongs to the bacterial ribosomal protein bL20 family.

Binds directly to 23S ribosomal RNA and is necessary for the in vitro assembly process of the 50S ribosomal subunit. It is not involved in the protein synthesizing functions of that subunit. The protein is Large ribosomal subunit protein bL20 of Rhodopirellula baltica (strain DSM 10527 / NCIMB 13988 / SH1).